Consider the following 129-residue polypeptide: Glycine cleavage system H protein (129 aa).

In terms of domain architecture, Lipoyl-binding spans 24-106 (TYTVGITEHA…YTGGWIFKIK (83 aa)). Residue Lys-65 is modified to N6-lipoyllysine.

It belongs to the GcvH family. In terms of assembly, the glycine cleavage system is composed of four proteins: P, T, L and H. It depends on (R)-lipoate as a cofactor.

In terms of biological role, the glycine cleavage system catalyzes the degradation of glycine. The H protein shuttles the methylamine group of glycine from the P protein to the T protein. This is Glycine cleavage system H protein from Salmonella choleraesuis (strain SC-B67).